The chain runs to 1060 residues: RNA-binding protein 27 (1060 aa).

Basic and acidic residues-rich tracts occupy residues 91 to 102 and 124 to 143; these read LVQEKEEIKEEV and TRSE…DGKW. Disordered stretches follow at residues 91–143 and 162–235; these read LVQE…DGKW and WRRG…GAQS. Over residues 165–185 the composition is skewed to basic residues; the sequence is GRSKSRSKSRGLSRSRSRSRG. Basic and acidic residues predominate over residues 186–211; the sequence is RSKDRDPNRNVEHRERSKFKSERNDL. The segment covering 225 to 235 has biased composition (polar residues); it reads SSEQYSSGAQS. The C3H1-type zinc-finger motif lies at 273-301; that stretch reads LPPKRRCRDYDERGFCVLGDLCQFDHGND. Pro residues-rich tracts occupy residues 319-356 and 371-384; these read PPPG…PGPG and QPPP…PRPP. The tract at residues 319 to 412 is disordered; the sequence is PPPGLPPPPP…PNLASVGTRL (94 aa). A compositionally biased stretch (polar residues) spans 386-402; it reads TQSSLINSRDQPGTSAV. A Phosphothreonine modification is found at threonine 447. Residue arginine 455 is modified to Omega-N-methylarginine. The interval 565 to 592 is disordered; it reads MSGLEGPLTKKPWLGKQGNNNQNKPGFL. A compositionally biased stretch (low complexity) spans 579 to 588; the sequence is GKQGNNNQNK. The RRM domain maps to 600 to 674; that stretch reads TKLEVKKIPQ…RFIRVLWHRE (75 aa). Positions 809-886 form a coiled coil; sequence VQEVLKKKQE…KDELKTSSAV (78 aa). Serine 927 carries the phosphoserine modification. Disordered stretches follow at residues 940–968 and 1006–1060; these read PVGR…SLNH and DRRL…SWRR. A phosphoserine mark is found at serine 1012 and serine 1020. The segment covering 1024 to 1053 has biased composition (acidic residues); it reads ETEEEEVKEEETETSDLFLPDDDDEDEDEY.

The protein localises to the cytoplasm. Its subcellular location is the nucleus speckle. Its function is as follows. May be involved in the turnover of nuclear polyadenylated (pA+) RNA. This Homo sapiens (Human) protein is RNA-binding protein 27.